The following is a 245-amino-acid chain: 1-(5-phosphoribosyl)-5-[(5-phosphoribosylamino)methylideneamino] imidazole-4-carboxamide isomerase (245 aa).

Asp7 functions as the Proton acceptor in the catalytic mechanism. Asp129 (proton donor) is an active-site residue.

The protein belongs to the HisA/HisF family.

Its subcellular location is the cytoplasm. The enzyme catalyses 1-(5-phospho-beta-D-ribosyl)-5-[(5-phospho-beta-D-ribosylamino)methylideneamino]imidazole-4-carboxamide = 5-[(5-phospho-1-deoxy-D-ribulos-1-ylimino)methylamino]-1-(5-phospho-beta-D-ribosyl)imidazole-4-carboxamide. It functions in the pathway amino-acid biosynthesis; L-histidine biosynthesis; L-histidine from 5-phospho-alpha-D-ribose 1-diphosphate: step 4/9. The sequence is that of 1-(5-phosphoribosyl)-5-[(5-phosphoribosylamino)methylideneamino] imidazole-4-carboxamide isomerase from Escherichia coli O127:H6 (strain E2348/69 / EPEC).